Reading from the N-terminus, the 77-residue chain is Homeodomain-only protein (77 aa).

The homeobox; degenerate DNA-binding region spans 7-65 (AALGVRLTEDQVKVLEENFTKVSKHPDETTLMLIAAECGLSEEQTAVWFRMRNAQWRKA).

It localises to the nucleus. The protein resides in the cytoplasm. In terms of biological role, atypical homeodomain protein which does not bind DNA and is required to modulate cardiac growth and development. May act via an interaction with SRF, leading to modulate the expression of SRF-dependent cardiac-specific genes and cardiac development. May act as a co-chaperone for HSPA1A and HSPA1B chaperone proteins and assist in chaperone-mediated protein refolding. This chain is Homeodomain-only protein (hopx), found in Danio rerio (Zebrafish).